The primary structure comprises 264 residues: 3-methyl-2-oxobutanoate hydroxymethyltransferase (264 aa).

Mg(2+)-binding residues include Asp-45 and Asp-84. 3-methyl-2-oxobutanoate-binding positions include 45-46 (DS), Asp-84, and Lys-112. Glu-114 is a binding site for Mg(2+). Glu-181 acts as the Proton acceptor in catalysis.

The protein belongs to the PanB family. As to quaternary structure, homodecamer; pentamer of dimers. Mg(2+) serves as cofactor.

Its subcellular location is the cytoplasm. The enzyme catalyses 3-methyl-2-oxobutanoate + (6R)-5,10-methylene-5,6,7,8-tetrahydrofolate + H2O = 2-dehydropantoate + (6S)-5,6,7,8-tetrahydrofolate. Its pathway is cofactor biosynthesis; (R)-pantothenate biosynthesis; (R)-pantoate from 3-methyl-2-oxobutanoate: step 1/2. Functionally, catalyzes the reversible reaction in which hydroxymethyl group from 5,10-methylenetetrahydrofolate is transferred onto alpha-ketoisovalerate to form ketopantoate. The protein is 3-methyl-2-oxobutanoate hydroxymethyltransferase of Escherichia coli O7:K1 (strain IAI39 / ExPEC).